Here is a 369-residue protein sequence, read N- to C-terminus: Glutamate 5-kinase (369 aa).

K9 lines the ATP pocket. Residues S49, D136, and N148 each contribute to the substrate site. ATP contacts are provided by residues T168–D169 and T210–K216. The 81-residue stretch at R275–W355 folds into the PUA domain.

The protein belongs to the glutamate 5-kinase family.

The protein localises to the cytoplasm. The catalysed reaction is L-glutamate + ATP = L-glutamyl 5-phosphate + ADP. It functions in the pathway amino-acid biosynthesis; L-proline biosynthesis; L-glutamate 5-semialdehyde from L-glutamate: step 1/2. Functionally, catalyzes the transfer of a phosphate group to glutamate to form L-glutamate 5-phosphate. The protein is Glutamate 5-kinase of Neisseria meningitidis serogroup A / serotype 4A (strain DSM 15465 / Z2491).